The primary structure comprises 267 residues: Energy-coupling factor transporter transmembrane protein EcfT (267 aa).

5 consecutive transmembrane segments (helical) span residues 30–50 (FWYVVIIFFAKGPLTYLLLVA), 67–87 (WAGLKPLLWVIGLTIAIQVLF), 110–130 (ALVILARFILIVLASTVLTAT), 152–172 (VPVNQIAMMISIALRFIPTIM), and 247–267 (SIALAVVVIVSVLFFVARILL).

It belongs to the energy-coupling factor EcfT family. Forms a stable energy-coupling factor (ECF) transporter complex composed of 2 membrane-embedded substrate-binding proteins (S component), 2 ATP-binding proteins (A component) and 2 transmembrane proteins (T component). May be able to interact with more than 1 S component at a time.

Its subcellular location is the cell membrane. Transmembrane (T) component of an energy-coupling factor (ECF) ABC-transporter complex. Unlike classic ABC transporters this ECF transporter provides the energy necessary to transport a number of different substrates. This Limosilactobacillus fermentum (strain CECT 5716 / Lc40) (Lactobacillus fermentum) protein is Energy-coupling factor transporter transmembrane protein EcfT.